We begin with the raw amino-acid sequence, 400 residues long: Acetate kinase (400 aa).

Asparagine 10 contacts Mg(2+). Position 17 (lysine 17) interacts with ATP. Arginine 91 is a substrate binding site. Catalysis depends on aspartate 150, which acts as the Proton donor/acceptor. Residues 210–214 (HLGSG), 285–287 (DCR), and 333–337 (GIGEN) each bind ATP. Position 387 (glutamate 387) interacts with Mg(2+).

The protein belongs to the acetokinase family. Homodimer. Mg(2+) serves as cofactor. Requires Mn(2+) as cofactor.

The protein localises to the cytoplasm. It catalyses the reaction acetate + ATP = acetyl phosphate + ADP. The protein operates within metabolic intermediate biosynthesis; acetyl-CoA biosynthesis; acetyl-CoA from acetate: step 1/2. Functionally, catalyzes the formation of acetyl phosphate from acetate and ATP. Can also catalyze the reverse reaction. The sequence is that of Acetate kinase from Baumannia cicadellinicola subsp. Homalodisca coagulata.